The chain runs to 516 residues: MGMWEEASDTGMKGKKKKKDKNEEEEEERGKKERMVNLTLEMIYLLTGEHYIPRKKSDDGGALHAPGSVIQKENNKNDEKILELMSNIIQLLTGEVAIRTHHVSIYFSLDEWDNIKGNKVLYEEGIKEEPQQLHPLDCEYEDKRDITADLGGTLCYNNETSKIGAEGTDFCAKENLTISPVEQPPPANRIKEERASCEEGNQSDCSINPLTEQIQGTDKPTPIMGYSLNNSSANYIKEEVVQCHEGNHSDMRIITAPESILETNTSAAMIRCNLNTSLSASCEGGNQSDCRINELTEQIQGTDTPTGNIVLYICSECQKHFSTKAGLARHQKTHSVFVGEEHAYGRIHTEEKPFPCSECGKRFARRQHLTDHQSSHTGEKPYACSQCEKYFPHRSNLNRHLKLHKGEKPFPCSQCGKRFPCVSDLNIHRRVHTGERPYSCSECGKCFKHHSNLTNHQRTHTREKPFSCTECGKGFKDRSSLTVHHRTHTGEKPFSCTECGKGFKDRSSLTVHHRTH.

Disordered stretches follow at residues Met1–Glu33 and Gly200–Pro220. Polar residues predominate over residues Gly200 to Asp218. 7 C2H2-type zinc fingers span residues Tyr312–His334, Phe354–His376, Tyr382–His404, Phe410–His432, Tyr438–His460, Phe466–His488, and Phe494–His516.

Belongs to the krueppel C2H2-type zinc-finger protein family.

The protein localises to the nucleus. Its function is as follows. May be involved in transcriptional regulation. The chain is Gastrula zinc finger protein XlCGF53.1 from Xenopus laevis (African clawed frog).